The primary structure comprises 613 residues: Autophagy-related protein 22-2 (613 aa).

The tract at residues 1–28 is disordered; it reads MVLNSTPPASPGAEAQQRPPRYPGEDTA. A helical transmembrane segment spans residues 41–61; that stretch reads YGIAAEVFAVCGVGSFLPLTL. Residues 80–96 show a composition bias toward polar residues; the sequence is GSSSPSTAPGNGTTTAT. The segment at 80–99 is disordered; sequence GSSSPSTAPGNGTTTATLRR. Asn-90 carries N-linked (GlcNAc...) asparagine glycosylation. Helical transmembrane passes span 120 to 140, 155 to 177, and 189 to 209; these read SFAM…LISF, LAFG…PVYI, and CLGS…ANDP. The tract at residues 216-257 is disordered; that stretch reads KEEGEELSPVNSSGEFARSEDLDEENVRDSDDHFTTGHGLKT. An N-linked (GlcNAc...) asparagine glycan is attached at Asn-226. A compositionally biased stretch (basic and acidic residues) spans 232 to 250; the sequence is ARSEDLDEENVRDSDDHFT. 4 consecutive transmembrane segments (helical) span residues 278 to 298, 307 to 327, 382 to 402, and 418 to 438; these read VGLG…MLFA, ISGT…WFSF, VIVF…VSGT, and VGLL…LWPV. The N-linked (GlcNAc...) asparagine glycan is linked to Asn-448. 4 helical membrane-spanning segments follow: residues 453 to 473, 488 to 510, 522 to 544, and 553 to 573; these read LCIA…IPLF, FPLG…SFFG, YALY…GMLI, and GFFF…MVNA. A disordered region spans residues 592–613; it reads GEHASEYGGPSEEAEGLLARDI.

The protein belongs to the ATG22 family.

It localises to the vacuole membrane. Vacuolar effluxer which mediate the efflux of amino acids resulting from autophagic degradation. The release of autophagic amino acids allows the maintenance of protein synthesis and viability during nitrogen starvation. This chain is Autophagy-related protein 22-2 (atg22-2), found in Neosartorya fischeri (strain ATCC 1020 / DSM 3700 / CBS 544.65 / FGSC A1164 / JCM 1740 / NRRL 181 / WB 181) (Aspergillus fischerianus).